Consider the following 859-residue polypeptide: MCAGFYVAVHPWLEAQSLHKVGHTGNLAARLHDGSYTTCFTDEWKYCFTLETSTKKDAQKIEAGVLYCAQFFRVKNKELVCLLPEKIKQLAEDVANCLDISYTLCDSPAYEMNDSTIVVEPSLPSDPLISKEKLRHLVITPVEDEEHFADDVLFFSTDETRTAIEDRLYQKEAANMGYQELRRSGRAILQMACRCGKTRVAYLILSNYLQGKVLYLVPGLSLLRQTLEKLYQYGISLKNVLLVGSDQTRIVLNHDNIEMTTNPVFIAKRIREAPSLLVIATYQSSTLLVDDFDLIISDECHRICGEWETRPFTHVLLNFKKGHRLFLTATPRYDTPLSMKNRELFGGVAFRYYLREGIEAGYVNDFELQMVAAPKLAHQPSTKEETTKQIIVKQIIMALAHLKTNITAPKMLVFTRDIKQAKELYAELVDQGVYALIAHSTLPRQVILKTFTEFCSSKEPVILLNCRLFQEGVEVPELNAVFFAAPRHSPRDIIQSICRPLNKQVQKPHATIFLPLEVNTENVCLDRFSSIIPFADALASEDPRFYEHLLNPSEVAYPINWIGAHGSVSELLQLARHAIRYGTQGKIDRLTRSERLPWKAAFAELKRTVEICCRYPKINDGFHFGGATLRFDTWYKWVIKSYLQYKNKEPSSLEPYQVSDLESLQDWTTRGVGGPYPWEESMAFLETWLAQNKGELVAIDIHQGGWIGLDATPMERLSGVLTTVSQRDGRSYGKNKKLRPKKGFMIPPQQAQDLDRIFGKHNLKWRKDRVNGFLKEDEHGNYTGEPTCIQEAYRTFKEYVKTNPEYIEKYWPGYAKGKHKHQELPHIWEKGLAPPRYKAFKDGNKQLIQRSPKKKDIKN.

In terms of domain architecture, Helicase ATP-binding spans 178-349 (YQELRRSGRA…KNRELFGGVA (172 aa)). 191–198 (MACRCGKT) is a binding site for ATP. The DEAH box signature appears at 298 to 301 (DECH). The Helicase C-terminal domain occupies 401–553 (HLKTNITAPK…RFYEHLLNPS (153 aa)).

The protein belongs to the asfivirus helicase A859L family.

In African swine fever virus (isolate Tick/South Africa/Pretoriuskop Pr4/1996) (ASFV), this protein is Probable helicase A859L.